We begin with the raw amino-acid sequence, 430 residues long: MTVTLPKGVFDIFPYLADAKQLWRHTSLWHSVEKAIHTVCMLYGFCEIRTPIFEKSEVFLHVGEESDVVKKEVYSFLDRKGRSMTLRPEGTAAVVRSFLEHGASHRSDNKFYYILPMFRYERQQAGRYRQHHQFGVEAIGVRHPLRDAEVLALLWDFYSRVGLQHMQIQLNFLGGSETRFRYDKVLRAYLKESMGELSALSQQRFSTNVLRILDSKEPEDQEIIRQAPPILDYVSDEDLKYFNEILDALRVLEIPYAINPRLVRGLDYYSDLVFEATTTFQEVSYALGGGGRYDGLISAFGGASLPACGFGVGLERAIQTLLAQKRIEPQFPHKLRLIPMEPDADQFCLEWSQHLRRLGIPTEVDWSHKKVKGALKAASTEQVSFVCLIGERELISQQLVIKNMSLRKEFFGTKEEVEQRLLYEIQNTPL.

Belongs to the class-II aminoacyl-tRNA synthetase family. Homodimer.

The protein localises to the cytoplasm. The enzyme catalyses tRNA(His) + L-histidine + ATP = L-histidyl-tRNA(His) + AMP + diphosphate + H(+). The sequence is that of Histidine--tRNA ligase (hisS) from Chlamydia pneumoniae (Chlamydophila pneumoniae).